The following is a 517-amino-acid chain: Protein disulfide isomerase-like 1-2 (517 aa).

The N-terminal stretch at 1–23 (MAVNLVLSFALAILISSSPTAVG) is a signal peptide. The Thioredoxin 1 domain maps to 24-143 (VDATEELKEA…IVEYLKRQVG (120 aa)). N-linked (GlcNAc...) asparagine glycosylation occurs at Asn-41. Residues Cys-61 and Cys-64 each act as nucleophile in the active site. A disulfide bond links Cys-61 and Cys-64. A glycan (N-linked (GlcNAc...) asparagine) is linked at Asn-301. A Thioredoxin 2 domain is found at 357 to 484 (VEYGNLTPYV…IISFINENRG (128 aa)). Residues Cys-407 and Cys-410 each act as nucleophile in the active site. A disulfide bridge links Cys-407 with Cys-410. The short motif at 514–517 (KDEL) is the Prevents secretion from ER element.

Belongs to the protein disulfide isomerase family.

It localises to the endoplasmic reticulum lumen. It catalyses the reaction Catalyzes the rearrangement of -S-S- bonds in proteins.. In terms of biological role, acts as a protein-folding catalyst that interacts with nascent polypeptides to catalyze the formation, isomerization, and reduction or oxidation of disulfide bonds. May play a role in storage protein biogenesis. This Oryza sativa subsp. japonica (Rice) protein is Protein disulfide isomerase-like 1-2 (PDIL1-2).